Reading from the N-terminus, the 1091-residue chain is LRR receptor-like serine/threonine-protein kinase RGI3 (1091 aa).

A signal peptide spans 1–24 (MPPNIYRLSFFSSLLCFFFIPCFS). Over 25–703 (LDQQGQALLS…TTRNSSVVRL (679 aa)) the chain is Extracellular. Residues 33–56 (LSWKSQLNISGDAFSSWHVADTSP) form an LRR 1 repeat. N40 carries an N-linked (GlcNAc...) asparagine glycan. C57 and C64 are joined by a disulfide. LRR repeat units lie at residues 67 to 91 (RGEV…SLRS), 92 to 115 (LKSL…EIGD), 116 to 140 (FTEL…IFRL), 142 to 166 (KLKT…NLSG), 168 to 188 (VELM…IGEL), 190 to 213 (NLQV…IGNC), 214 to 237 (ENLV…IGNL), 239 to 261 (RVQT…IGYC), 262 to 285 (TELQ…IGGL), 287 to 309 (KLQS…LGNC), 311 to 332 (ELWL…SFGK), 333 to 357 (LENL…LTNC), 359 to 383 (KLTH…NLRS), 385 to 405 (TMFF…LSQC), 406 to 429 (RELQ…IFGL), 431 to 453 (NLTK…IGNC), 454 to 477 (TNLY…IGNL), 478 to 501 (KNLN…ISGC), 503 to 524 (SLEF…TTLP), 525 to 548 (KSLK…IGLL), 549 to 572 (TELT…ISTC), 574 to 596 (SLQL…LGQI), 598 to 620 (SLAI…RFSD), 621 to 644 (LKNL…LTDL), 645 to 668 (QNLV…PFFR), and 669 to 690 (RLPL…ISTR). N-linked (GlcNAc...) asparagine glycosylation occurs at N104. N163 carries N-linked (GlcNAc...) asparagine glycosylation. Short sequence motifs (small peptide recognition) lie at residues 173-174 (FD), 195-198 (RAGG), 218-223 (MLGLAE), Y246, and 268-270 (YLY). 2 short sequence motifs (small peptide recognition) span residues 316–319 (DFSE) and 338–340 (ELQ). N356 is a glycosylation site (N-linked (GlcNAc...) asparagine). Short sequence motifs (small peptide recognition) lie at residues 386-390 (MFFAW) and 412-415 (DLSY). N-linked (GlcNAc...) asparagine glycosylation is present at N431. The Small peptide recognition signature appears at 434–438 (KLLLL). N452 carries N-linked (GlcNAc...) asparagine glycosylation. The short motif at 458 to 460 (RLR) is the Small peptide recognition element. N-linked (GlcNAc...) asparagine glycosylation is present at N604. Residue N651 is glycosylated (N-linked (GlcNAc...) asparagine). N697 carries N-linked (GlcNAc...) asparagine glycosylation. Residues 704–724 (TILILVVVTAVLVLMAVYTLV) form a helical membrane-spanning segment. The Cytoplasmic portion of the chain corresponds to 725–1091 (RARAAGKQLL…CSFAFSDDSV (367 aa)). The Protein kinase domain maps to 760–1046 (LTSANVIGTG…MLTEIRHIDV (287 aa)). Residues 766-774 (IGTGSSGVV) and K788 contribute to the ATP site. Phosphotyrosine is present on residues Y831 and Y870. D883 functions as the Proton acceptor in the catalytic mechanism. The residue at position 933 (Y933) is a Phosphotyrosine.

It belongs to the protein kinase superfamily. Ser/Thr protein kinase family. As to quaternary structure, binds to RGF peptides such as RGF1, GLV5/CLEL1/RGF2, GLV7/CLEL3/RGF3, GLV3/RGF4, GLV10/CLEL7/RGF5 and RGF10/CLELN; these interactions trigger the formation of heterodimers with SERK1, SERK2 or BAK1/SERK3 via LRR regions. In terms of processing, phosphorylated and ubiquitinated upon interaction with RGF1, thus leading to activation a subsequent degradation. Post-translationally, autophosphorylated. As to expression, expressed in roots.

It localises to the cell membrane. The catalysed reaction is L-seryl-[protein] + ATP = O-phospho-L-seryl-[protein] + ADP + H(+). It carries out the reaction L-threonyl-[protein] + ATP = O-phospho-L-threonyl-[protein] + ADP + H(+). In terms of biological role, together with RGI1, RGI2, RGI4 and RGI5, acts as a receptor of RGF peptides (e.g. RGF1, GLV5/CLEL1/RGF2, GLV7/CLEL3/RGF3, GLV3/RGF4, GLV10/CLEL7/RGF5 and RGF10/CLELN), peptide hormones which maintain the postembryonic root stem cell niche by regulating the expression levels and patterns of the transcription factor PLETHORA (PLT, e.g. PLT1 and PLT2). Links RGF peptides signal with their downstream components. This chain is LRR receptor-like serine/threonine-protein kinase RGI3, found in Arabidopsis thaliana (Mouse-ear cress).